The following is a 512-amino-acid chain: Rab11 family-interacting protein 2 (512 aa).

One can recognise a C2 domain in the interval 1–120 (MMLSEQAQKW…DKQRRKTEWF (120 aa)). Positions 15–102 (VQVTVLQAKD…GLDKFLGQVA (88 aa)) are necessary for its cellular translocation to the plasma membrane. 2 disordered regions span residues 169-239 (DKMK…MSSE) and 262-285 (VPES…KMNQ). Positions 178–188 (GTFSDTSSAII) are enriched in polar residues. A compositionally biased stretch (low complexity) spans 226–236 (HSMSDLSGSHM). At serine 227 the chain carries Phosphoserine; by MARK2. Serine 277 carries the phosphoserine modification. Positions 323–325 (NPF) match the NPF 1 motif. The span at 361–374 (ERVTGKKDSRRSDK) shows a compositional bias: basic and acidic residues. Positions 361–392 (ERVTGKKDSRRSDKLNNGGSDSPCDLKSPNAF) are disordered. 2 consecutive short sequence motifs (NPF) follow at residues 406–408 (NPF) and 440–442 (NPF). The FIP-RBD domain maps to 437–499 (PDSNPFDATA…EETPSILRVP (63 aa)). The interval 465-512 (ELLRRKDTHIRELEDYIDNLLVRVMEETPSILRVPYEPSRKAGKFSNS) is necessary for interaction with AP2A1, RAB11A, subcellular location, endocytosis activity and homooligomerization.

As to quaternary structure, homooligomerizes in a Rab11-independent manner. Forms a heterooligomeric complex with RAB11FIP4. Interacts with AP2A1, MYO5B, RAB25 and REPS1. Interacts with RAB11A and RAB11B (activated GTP-bound form). Interacts with NPC1L1. Interacts (via NPF motifs) with EHD1 and EHD3. Interacts with TICAM2; this interaction directs RAB11FIP2 to the phagosome. Interacts with RAB14 and RAB25 (GTP-bound forms). Post-translationally, phosphorylation at Ser-227 by MARK2 regulates epithelial cell polarity.

The protein localises to the cell projection. It localises to the phagocytic cup. It is found in the cell membrane. The protein resides in the recycling endosome membrane. A Rab11 effector binding preferentially phosphatidylinositol 3,4,5-trisphosphate (PtdInsP3) and phosphatidic acid (PA) and acting in the regulation of the transport of vesicles from the endosomal recycling compartment (ERC) to the plasma membrane. Involved in insulin granule exocytosis. Also involved in receptor-mediated endocytosis and membrane trafficking of recycling endosomes, probably originating from clathrin-coated vesicles. Required in a complex with MYO5B and RAB11 for the transport of NPC1L1 to the plasma membrane. Also acts as a regulator of cell polarity. Plays an essential role in phagocytosis through a mechanism involving TICAM2, RAC1 and CDC42 Rho GTPases for controlling actin-dynamics. In Homo sapiens (Human), this protein is Rab11 family-interacting protein 2 (RAB11FIP2).